The following is a 386-amino-acid chain: TRIBOA-glucoside O-methyltransferase BX7 (386 aa).

Positions 224, 248, 270, and 283 each coordinate S-adenosyl-L-methionine. H287 acts as the Proton acceptor in catalysis.

The protein belongs to the class I-like SAM-binding methyltransferase superfamily. Cation-independent O-methyltransferase family. COMT subfamily. Expressed in seedlings and newly formed crown roots. Highest expression in the scutellar node. Low to non detectable levels in cob, tassel and mature organs like husk or leaves.

The enzyme catalyses TRIBOA beta-D-glucoside + S-adenosyl-L-methionine = DIMBOA beta-D-glucoside + S-adenosyl-L-homocysteine + H(+). Its function is as follows. O-methyltransferase involved in the benzoxazinoid glucoside biosynthesis. Can use 2,4,7-trihydroxy-2H-1,4-benzoxazin-3(4H)-one 2-D-glucoside (TRIBOA-glucoside) as substrate, but not aglucone TRIBOA, caffeic acid, ferulic acid, apigenin or quercetin. This is TRIBOA-glucoside O-methyltransferase BX7 (BX7) from Zea mays (Maize).